A 1453-amino-acid polypeptide reads, in one-letter code: NK-tumor recognition protein (1453 aa).

In terms of domain architecture, PPIase cyclophilin-type spans 10-175 (HFDIEINREP…ADVRVIDCGV (166 aa)). The segment at 187-625 (KKRKKPTCSE…RWKPGQKPWK (439 aa)) is disordered. Low complexity predominate over residues 195–213 (SEGSDSSSRSSSSSESSSE). Positions 221-240 (IRRRRHKRRPKVRHAKKRRK) are enriched in basic residues. A compositionally biased stretch (basic and acidic residues) spans 259-286 (YSERSDVNEKRSVDSNTKREKPVVRPEE). A Glycyl lysine isopeptide (Lys-Gly) (interchain with G-Cter in SUMO2) cross-link involves residue Lys-323. Basic residues predominate over residues 329 to 348 (SGRKIKGRGTIRYHTPPRSR). 3 positions are modified to phosphoserine: Ser-379, Ser-401, and Ser-416. Positions 382 to 402 (KWSKGDKLSDPCSSRWDERSL) are enriched in basic and acidic residues. The segment covering 403–421 (SQRSRSWSYNGYYSDLSTA) has biased composition (polar residues). Positions 425–460 (DGHHKKHRKEKKFKHKKKAKKQKHCRRHRQTKKRRI) are enriched in basic residues. The segment covering 514–531 (SSRDSYRSKSHSRSDSRG) has biased composition (basic and acidic residues). Low complexity-rich tracts occupy residues 532–546 (SSRSRAVSKSSSRSL) and 554–565 (SSRSGPRRTSIS). Glycyl lysine isopeptide (Lys-Gly) (interchain with G-Cter in SUMO2) cross-links involve residues Lys-576 and Lys-579. Ser-611 is modified (phosphoserine). A Glycyl lysine isopeptide (Lys-Gly) (interchain with G-Cter in SUMO2) cross-link involves residue Lys-637. Ser-646 carries the post-translational modification Phosphoserine. Over residues 651-661 (TNIKATVSSSS) the composition is skewed to polar residues. Residues 651–1453 (TNIKATVSSS…RSPSESSRYS (803 aa)) are disordered. Residues Lys-654 and Lys-664 each participate in a glycyl lysine isopeptide (Lys-Gly) (interchain with G-Cter in SUMO2) cross-link. Composition is skewed to low complexity over residues 682 to 726 (RSSG…SSRS) and 736 to 749 (SQHSRSSSYTSVSS). Residues 755–772 (AMFRSNRKKSVTSHKRHR) are compositionally biased toward basic residues. Residues 773 to 789 (SNSEKTLHSKYVRGREK) are compositionally biased toward basic and acidic residues. The span at 799–809 (SRSSLDYSSDS) shows a compositional bias: low complexity. Basic and acidic residues-rich tracts occupy residues 820-852 (PEKEKQGKVEALNDKQGKGREEGKPKPEWECPR) and 859-868 (KDHSRDDSVS). A phosphoserine mark is found at Ser-880, Ser-882, Ser-884, and Ser-900. A compositionally biased stretch (basic and acidic residues) spans 887–902 (DVTKSRKSDPRRGSEK). Residues 903-913 (EEGEASSDSES) are compositionally biased toward acidic residues. Residues 948–958 (SSASESESSCS) are compositionally biased toward low complexity. The segment covering 966–982 (EPQKQKHSKDDLKGDHT) has biased composition (basic and acidic residues). Positions 983-1005 (KRAREKSKAKKDKKHKAPKRKQA) are enriched in basic residues. Residues 1030-1045 (DPKEKRHVSEKCEAVK) are compositionally biased toward basic and acidic residues. A phosphoserine mark is found at Ser-1139 and Ser-1148. A compositionally biased stretch (polar residues) spans 1170-1180 (QESSMSESKTL). Residues 1189–1199 (SSTSVTSPVET) show a composition bias toward low complexity. Ser-1195 is modified (phosphoserine). Residues Lys-1208 and Lys-1249 each participate in a glycyl lysine isopeptide (Lys-Gly) (interchain with G-Cter in SUMO2) cross-link. The arg/Ser tandem repeat-rich stretch occupies residues 1303–1453 (RSPHRSRSKS…RSPSESSRYS (151 aa)). Over residues 1322-1346 (SVSYSHSRSRSRSSTSSYRSRSYSR) the composition is skewed to low complexity. The segment covering 1369 to 1379 (HSHRTSSRSRS) has biased composition (basic residues). Positions 1380-1401 (RSSSYDLHSRSRSYTYDSYYSR) are enriched in low complexity. Residues 1416–1426 (RGRSYNRRSRS) are compositionally biased toward basic residues.

It is found in the cell membrane. The enzyme catalyses [protein]-peptidylproline (omega=180) = [protein]-peptidylproline (omega=0). Inhibited by cyclosporin A (CsA). PPIase that catalyzes the cis-trans isomerization of proline imidic peptide bonds in oligopeptides and may therefore assist protein folding. Component of a putative tumor-recognition complex involved in the function of NK cells. This is NK-tumor recognition protein from Mus musculus (Mouse).